The primary structure comprises 549 residues: Glucose-6-phosphate isomerase (549 aa).

Glu-353 functions as the Proton donor in the catalytic mechanism. Active-site residues include His-384 and Lys-510.

Belongs to the GPI family.

The protein resides in the cytoplasm. It catalyses the reaction alpha-D-glucose 6-phosphate = beta-D-fructose 6-phosphate. Its pathway is carbohydrate biosynthesis; gluconeogenesis. It functions in the pathway carbohydrate degradation; glycolysis; D-glyceraldehyde 3-phosphate and glycerone phosphate from D-glucose: step 2/4. Functionally, catalyzes the reversible isomerization of glucose-6-phosphate to fructose-6-phosphate. In Mycolicibacterium smegmatis (Mycobacterium smegmatis), this protein is Glucose-6-phosphate isomerase.